The chain runs to 144 residues: Small ribosomal subunit protein eS17 (144 aa).

It belongs to the eukaryotic ribosomal protein eS17 family.

In Solanum lycopersicum (Tomato), this protein is Small ribosomal subunit protein eS17 (RPS17).